A 549-amino-acid chain; its full sequence is ATP synthase subunit alpha (549 aa).

172 to 179 lines the ATP pocket; sequence GDRKTGKT. A disordered region spans residues 513-549; sequence SSTGESVVPDEHVEAMDEEDLGKESVKVKKPAPQKKK. The segment covering 540-549 has biased composition (basic residues); the sequence is VKKPAPQKKK.

Belongs to the ATPase alpha/beta chains family. As to quaternary structure, F-type ATPases have 2 components, CF(1) - the catalytic core - and CF(0) - the membrane proton channel. CF(1) has five subunits: alpha(3), beta(3), gamma(1), delta(1), epsilon(1). CF(0) has three main subunits: a(1), b(2) and c(9-12). The alpha and beta chains form an alternating ring which encloses part of the gamma chain. CF(1) is attached to CF(0) by a central stalk formed by the gamma and epsilon chains, while a peripheral stalk is formed by the delta and b chains.

It localises to the cell membrane. The enzyme catalyses ATP + H2O + 4 H(+)(in) = ADP + phosphate + 5 H(+)(out). Produces ATP from ADP in the presence of a proton gradient across the membrane. The alpha chain is a regulatory subunit. The chain is ATP synthase subunit alpha from Mycobacterium ulcerans (strain Agy99).